An 889-amino-acid polypeptide reads, in one-letter code: Mitochondrial intermediate peptidase (889 aa).

Residues 1 to 30 (MASTSKNAQRAAASVAHSYHVCLARRMSRL) constitute a mitochondrion transit peptide. The segment at 60–112 (SSSLAAQRVQRPTSAGPILTNPISDHEKDNDELRSLFDAPPTSSSANHLRSSG) is disordered. Residues 83-94 (SDHEKDNDELRS) are compositionally biased toward basic and acidic residues. Positions 100 to 112 (PTSSSANHLRSSG) are enriched in polar residues. Residue H670 participates in Zn(2+) binding. E671 is a catalytic residue. Positions 674 and 677 each coordinate Zn(2+).

Belongs to the peptidase M3 family. Zn(2+) serves as cofactor.

The protein localises to the mitochondrion matrix. The catalysed reaction is Release of an N-terminal octapeptide as second stage of processing of some proteins imported into the mitochondrion.. Cleaves proteins, imported into the mitochondrion, to their mature size. While most mitochondrial precursor proteins are processed to the mature form in one step by mitochondrial processing peptidase (MPP), the sequential cleavage by MIP of an octapeptide after initial processing by MPP is a required step for a subgroup of nuclear-encoded precursor proteins destined for the matrix or the inner membrane. The sequence is that of Mitochondrial intermediate peptidase (OCT1) from Mycosarcoma maydis (Corn smut fungus).